A 156-amino-acid polypeptide reads, in one-letter code: Arginine repressor (156 aa).

The protein belongs to the ArgR family.

The protein resides in the cytoplasm. Its pathway is amino-acid biosynthesis; L-arginine biosynthesis [regulation]. In terms of biological role, regulates arginine biosynthesis genes. In Photorhabdus laumondii subsp. laumondii (strain DSM 15139 / CIP 105565 / TT01) (Photorhabdus luminescens subsp. laumondii), this protein is Arginine repressor.